We begin with the raw amino-acid sequence, 218 residues long: Vacuolar protein-sorting-associated protein 37 homolog 2 (218 aa).

The tract at residues 1 to 51 (MFNFWGSKEQQQGQSRPSPEASATPWYSPSLVTSPSSSRPQTSGQIPSHVS) is disordered. The segment covering 8–17 (KEQQQGQSRP) has biased composition (polar residues). Over residues 28 to 40 (SPSLVTSPSSSRP) the composition is skewed to low complexity. The region spanning 137 to 218 (QEKLNELENQ…HLAAKTSSIG (82 aa)) is the VPS37 C-terminal domain.

It belongs to the VPS37 family. As to quaternary structure, component of the endosomal sorting required for transport complex I (ESCRT-I), composed of ELC, VPS28 and VPS37. Interacts with ELC.

The protein localises to the endosome. In terms of biological role, component of the ESCRT-I complex (endosomal sorting complex required for transport I), a regulator of vesicular trafficking process. Required for the sorting of endocytic ubiquitinated cargos into multivesicular bodies (MVBs). In Arabidopsis thaliana (Mouse-ear cress), this protein is Vacuolar protein-sorting-associated protein 37 homolog 2 (VPS37-2).